The chain runs to 225 residues: Late gene expression regulator BDLF4 (225 aa).

A disordered region spans residues 1 to 20; that stretch reads MSDQGRLSLPRGEGGTDEPN.

It belongs to the herpesviridae UL92 family.

Its function is as follows. Part of the viral pre-initiation complex (vPIC) that is responsible for the expression of vPIC-dependent late genes. vPIC is composed of at least BcRF1 that binds the viral TATT box, BDLF3.5, BDLF4, BFRF2, BGLF3, BGLF4 and BVLF1. The protein is Late gene expression regulator BDLF4 of Homo sapiens (Human).